The primary structure comprises 262 residues: Phosphate import ATP-binding protein PstB (262 aa).

Residues 16 to 257 (IDVRNLNFYY…PHRKETEDYI (242 aa)) form the ABC transporter domain. An ATP-binding site is contributed by 48 to 55 (GPSGCGKS).

It belongs to the ABC transporter superfamily. Phosphate importer (TC 3.A.1.7) family. In terms of assembly, the complex is composed of two ATP-binding proteins (PstB), two transmembrane proteins (PstC and PstA) and a solute-binding protein (PstS).

It localises to the cell inner membrane. The catalysed reaction is phosphate(out) + ATP + H2O = ADP + 2 phosphate(in) + H(+). Part of the ABC transporter complex PstSACB involved in phosphate import. Responsible for energy coupling to the transport system. The protein is Phosphate import ATP-binding protein PstB of Cupriavidus pinatubonensis (strain JMP 134 / LMG 1197) (Cupriavidus necator (strain JMP 134)).